Reading from the N-terminus, the 252-residue chain is Triosephosphate isomerase (252 aa).

9–11 (NWK) contacts substrate. The active-site Electrophile is the His95. Catalysis depends on Glu167, which acts as the Proton acceptor. Substrate contacts are provided by residues Gly173, Ser213, and 234–235 (GG).

This sequence belongs to the triosephosphate isomerase family. In terms of assembly, homodimer.

Its subcellular location is the cytoplasm. It carries out the reaction D-glyceraldehyde 3-phosphate = dihydroxyacetone phosphate. It functions in the pathway carbohydrate biosynthesis; gluconeogenesis. Its pathway is carbohydrate degradation; glycolysis; D-glyceraldehyde 3-phosphate from glycerone phosphate: step 1/1. Its function is as follows. Involved in the gluconeogenesis. Catalyzes stereospecifically the conversion of dihydroxyacetone phosphate (DHAP) to D-glyceraldehyde-3-phosphate (G3P). The sequence is that of Triosephosphate isomerase from Syntrophotalea carbinolica (strain DSM 2380 / NBRC 103641 / GraBd1) (Pelobacter carbinolicus).